The following is a 220-amino-acid chain: Ribonuclease HII (220 aa).

Residues 32–220 enclose the RNase H type-2 domain; that stretch reads KHIAGIDEAG…FAPIKGRFDC (189 aa). Residues aspartate 38, glutamate 39, and aspartate 130 each coordinate a divalent metal cation.

It belongs to the RNase HII family. Mn(2+) serves as cofactor. Requires Mg(2+) as cofactor.

The protein localises to the cytoplasm. The catalysed reaction is Endonucleolytic cleavage to 5'-phosphomonoester.. In terms of biological role, endonuclease that specifically degrades the RNA of RNA-DNA hybrids. This is Ribonuclease HII from Brucella canis (strain ATCC 23365 / NCTC 10854 / RM-666).